The chain runs to 95 residues: ATP-dependent Clp protease adapter protein ClpS (95 aa).

Belongs to the ClpS family. Binds to the N-terminal domain of the chaperone ClpA.

Its function is as follows. Involved in the modulation of the specificity of the ClpAP-mediated ATP-dependent protein degradation. The chain is ATP-dependent Clp protease adapter protein ClpS from Synechococcus elongatus (strain ATCC 33912 / PCC 7942 / FACHB-805) (Anacystis nidulans R2).